A 61-amino-acid chain; its full sequence is MKAFYGMLVIFILCSTCYISVDSQIDTNVKCSGSSKCVKICIDRYNTRGAKCINGRCTCYP.

Positions 1-23 (MKAFYGMLVIFILCSTCYISVDS) are cleaved as a signal peptide. The residue at position 24 (Gln-24) is a Pyrrolidone carboxylic acid. 3 disulfides stabilise this stretch: Cys-31–Cys-52, Cys-37–Cys-57, and Cys-41–Cys-59.

This sequence belongs to the short scorpion toxin superfamily. Potassium channel inhibitor family. Alpha-KTx 15 subfamily. Expressed by the venom gland.

Its subcellular location is the secreted. Irreversibly blocks the A-type voltage-gated potassium channels in rat cerebellum granular cells (190 nM induce 50% inhibitory effect) (IC(50)=190 nM). Also weakly inhibits Kv1.2/KCNA2 and Kv1.3/KCNA3. This is Potassium channel toxin alpha-KTx 15.6 from Tityus discrepans (Venezuelan scorpion).